We begin with the raw amino-acid sequence, 209 residues long: Large ribosomal subunit protein uL3 (209 aa).

Glutamine 150 carries the N5-methylglutamine modification.

It belongs to the universal ribosomal protein uL3 family. Part of the 50S ribosomal subunit. Forms a cluster with proteins L14 and L19. In terms of processing, methylated by PrmB.

One of the primary rRNA binding proteins, it binds directly near the 3'-end of the 23S rRNA, where it nucleates assembly of the 50S subunit. This is Large ribosomal subunit protein uL3 from Pasteurella multocida (strain Pm70).